A 1905-amino-acid chain; its full sequence is Transport and Golgi organization protein 1 homolog (1905 aa).

The signal sequence occupies residues 1–22 (MAAAQGLLFWLLLLGPPCRVPG). Topologically, residues 23 to 1141 (QPEQDPGRRF…EPASVTPLEN (1119 aa)) are lumenal. Positions 45-107 (MLMYRGEALE…PKDLIQVVHE (63 aa)) constitute an SH3 domain. Positions 154 to 167 (SEKVKEKTAQRVEE) are enriched in basic and acidic residues. Disordered stretches follow at residues 154 to 259 (SEKV…HEQE) and 313 to 621 (TVGK…IKDR). Asparagine 173 carries an N-linked (GlcNAc...) asparagine glycan. Positions 173–190 (NESDAEPEPGEPNSEESE) are enriched in acidic residues. Residues 198-208 (AELRERSEAQK) are compositionally biased toward basic and acidic residues. Over residues 209–220 (SHPQVNSQTGHA) the composition is skewed to polar residues. 2 positions are modified to phosphoserine: serine 226 and serine 229. Residues 234-245 (LQDKLKVPDSEN) are compositionally biased toward basic and acidic residues. Asparagine 246 carries N-linked (GlcNAc...) asparagine glycosylation. Residues 246–255 (NKTSNSSQVS) show a composition bias toward polar residues. The segment covering 317–327 (EEEENKEDFDE) has biased composition (acidic residues). Composition is skewed to basic and acidic residues over residues 337–366 (EDTKSPGHSGIEKHPTEKEQNSNKEHKVEE) and 373–386 (KKGDKEIPKHREDT). Acidic residues predominate over residues 392 to 414 (MEGEENTDTDLESSDSKEEDDPL). Composition is skewed to basic and acidic residues over residues 419–436 (RLGKPRPEDHTDPEKAAD) and 459–480 (HMKDKGRKVEEPRRDWVQHEVG). Positions 467–527 (VEEPRRDWVQ…ANQENDLKGA (61 aa)) form a coiled coil. The segment covering 488 to 500 (DQAVQGSSQSGHL) has biased composition (polar residues). Basic and acidic residues predominate over residues 531–542 (ISKEMLHEEKPS). Residue asparagine 627 is glycosylated (N-linked (GlcNAc...) asparagine). Disordered stretches follow at residues 657–908 (QQGG…PHAP), 1036–1059 (APPAAAQPVEGGWDGPAEDTQPPL), and 1085–1118 (PVTRDMGTSGVAQKPQTEEDGDPGIITPQGTPVD). Over residues 669 to 714 (VSEKRELPEEEVTRVTKDASDEGQEVRKTGQTDSIEGRGFRPKEPN) the composition is skewed to basic and acidic residues. Acidic residues predominate over residues 715 to 730 (PEDEDYSPEELLEDEN). Composition is skewed to basic and acidic residues over residues 736–751 (QSKERSPEIQDKRLDV), 766–789 (TDPETEKNKEETRHVSENERKNET), 842–859 (SQKKDPDYLKEDNHEGHP), and 868–884 (PGVEPSKEDDEHAEKFV). The residue at position 873 (serine 873) is a Phosphoserine. The stretch at 1142–1162 (AIAFIYSLVFHLTKTLLATLP) is an intramembrane region. At 1163 to 1173 (DDVQPGPDFYG) the chain is on the lumenal side. A helical membrane pass occupies residues 1174-1194 (LPWKPVLITASLGIVSFAVFF). Topologically, residues 1195–1905 (WRTVLAVKSR…DCSPALKQSP (711 aa)) are cytoplasmic. The segment at 1208 to 1647 (VTEQQISEKL…VIVKPMPGRP (440 aa)) is mediates interaction with MIA2. Positions 1211-1393 (QQISEKLKNI…SQKDLEVALT (183 aa)) form a coiled coil. Positions 1416–1443 (SESEDQNKGGSESDELANGEVGGDRSEK) are disordered. The residue at position 1428 (serine 1428) is a Phosphoserine. Residues 1484-1636 (NLEDQIKKLE…TQKMAMMQEE (153 aa)) adopt a coiled-coil conformation. The segment at 1639–1905 (IVKPMPGRPN…DCSPALKQSP (267 aa)) is disordered. Residues 1647–1664 (PNTQNPPRRGPLSQNGSF) show a composition bias toward polar residues. 6 positions are modified to phosphoserine: serine 1663, serine 1675, serine 1703, serine 1724, serine 1738, and serine 1742. Residues 1748-1905 (DEGKVSMAAK…DCSPALKQSP (158 aa)) form a proline-rich domain (PRD); mediates interaction with the COPII coat subunits SEC23A and SEC23B region. Over residues 1776–1806 (LLPPIRYGPPPQLCGPFGPRPLPPPFGPGMR) the composition is skewed to pro residues. Position 1781 is an asymmetric dimethylarginine (arginine 1781). Residues 1785–1845 (PPQLCGPFGP…GHAPFRPLGS (61 aa)) are SEC16A-interacting region (SIR); required for its localization to endoplasmic reticulum exit sites and for its interaction with SEC16A. Residues 1821–1831 (GKRDLPLDPRE) show a composition bias toward basic and acidic residues. 2 positions are modified to phosphoserine: serine 1890 and serine 1904. Over residues 1891–1905 (QGASQDCSPALKQSP) the composition is skewed to polar residues.

It belongs to the MIA/OTOR family. Tango1 subfamily. As to quaternary structure, interacts with MIA2. Interacts (via SH3 domain) with COL7A1. Interacts with the COPII coat subunits SEC23A, SEC23B and maybe SEC24C. May interact with APOB and MIA2. Interacts with SEC16A.

The protein localises to the endoplasmic reticulum membrane. Its function is as follows. Plays a role in the transport of cargos that are too large to fit into COPII-coated vesicles and require specific mechanisms to be incorporated into membrane-bound carriers and exported from the endoplasmic reticulum. This protein is required for collagen VII (COL7A1) secretion by loading COL7A1 into transport carriers. It may participate in cargo loading of COL7A1 at endoplasmic reticulum exit sites by binding to COPII coat subunits Sec23/24 and guiding SH3-bound COL7A1 into a growing carrier. Does not play a role in global protein secretion and is apparently specific to COL7A1 cargo loading. However, it may participate in secretion of other proteins in cells that do not secrete COL7A1. It is also specifically required for the secretion of lipoproteins by participating in their export from the endoplasmic reticulum. Required for correct assembly of COPII coat components at endoplasmic reticulum exit sites (ERES) and for the localization of SEC16A and membrane-bound ER-resident complexes consisting of MIA2 and PREB/SEC12 to ERES. The protein is Transport and Golgi organization protein 1 homolog of Bos taurus (Bovine).